The chain runs to 369 residues: DNA replication and repair protein RecF (369 aa).

Glycine 30–threonine 37 lines the ATP pocket.

It belongs to the RecF family.

Its subcellular location is the cytoplasm. Functionally, the RecF protein is involved in DNA metabolism; it is required for DNA replication and normal SOS inducibility. RecF binds preferentially to single-stranded, linear DNA. It also seems to bind ATP. In Streptococcus equi subsp. zooepidemicus (strain H70), this protein is DNA replication and repair protein RecF.